Consider the following 433-residue polypeptide: Elongation factor 1-alpha (433 aa).

Residues 5 to 227 enclose the tr-type G domain; sequence KPHLNLVVIG…AFDFFKEPPR (223 aa). Residues 14 to 21 form a G1 region; that stretch reads GHIDHGKS. 14–21 lines the GTP pocket; that stretch reads GHIDHGKS. Mg(2+) is bound at residue serine 21. The G2 stretch occupies residues 70-74; it reads GITID. The segment at 91–94 is G3; the sequence is DAPG. GTP is bound by residues 91–95 and 153–156; these read DAPGH and NKMD. A G4 region spans residues 153 to 156; the sequence is NKMD. Positions 192–194 are G5; the sequence is SAW.

Belongs to the TRAFAC class translation factor GTPase superfamily. Classic translation factor GTPase family. EF-Tu/EF-1A subfamily.

The protein localises to the cytoplasm. The catalysed reaction is GTP + H2O = GDP + phosphate + H(+). Its function is as follows. GTP hydrolase that promotes the GTP-dependent binding of aminoacyl-tRNA to the A-site of ribosomes during protein biosynthesis. The chain is Elongation factor 1-alpha from Thermofilum pendens (strain DSM 2475 / Hrk 5).